We begin with the raw amino-acid sequence, 275 residues long: Mitochondrial fission factor homolog A (275 aa).

Topologically, residues 1–255 are cytoplasmic; that stretch reads MAEVNRIHYE…ENKERAKREM (255 aa). The segment at 100 to 171 is disordered; the sequence is DFLEPEPAAN…PLISPEDSQN (72 aa). Positions 114–130 are enriched in basic and acidic residues; the sequence is PREEMKSHFRSRREQCR. A compositionally biased stretch (polar residues) spans 131–142; it reads SENSTMRRNGQI. A coiled-coil region spans residues 223–253; sequence LTDAASLRRQIIKLNRRLQLLEHENKERAKR. A helical; Anchor for type IV membrane protein membrane pass occupies residues 256–273; the sequence is VMYSLTVAFWLVNSWIWL. Residues 274–275 are Extracellular-facing; it reads RR.

This sequence belongs to the Tango11 family.

The protein localises to the mitochondrion outer membrane. It localises to the peroxisome. In terms of biological role, plays a role in mitochondrial and peroxisomal fission. Promotes the recruitment and association of the fission mediator dynamin-related protein 1 (DNM1L) to the mitochondrial surface. The polypeptide is Mitochondrial fission factor homolog A (Danio rerio (Zebrafish)).